A 128-amino-acid polypeptide reads, in one-letter code: Large ribosomal subunit protein uL22 (128 aa).

Residues 1–20 (MANGHRSQIKRERNAVKDTR) are disordered. Positions 9–20 (IKRERNAVKDTR) are enriched in basic and acidic residues.

It belongs to the universal ribosomal protein uL22 family. In terms of assembly, part of the 50S ribosomal subunit.

This protein binds specifically to 23S rRNA; its binding is stimulated by other ribosomal proteins, e.g. L4, L17, and L20. It is important during the early stages of 50S assembly. It makes multiple contacts with different domains of the 23S rRNA in the assembled 50S subunit and ribosome. In terms of biological role, the globular domain of the protein is located near the polypeptide exit tunnel on the outside of the subunit, while an extended beta-hairpin is found that lines the wall of the exit tunnel in the center of the 70S ribosome. The chain is Large ribosomal subunit protein uL22 from Lachnospira eligens (strain ATCC 27750 / DSM 3376 / VPI C15-48 / C15-B4) (Eubacterium eligens).